Here is a 360-residue protein sequence, read N- to C-terminus: Peptide chain release factor 1 (360 aa).

N5-methylglutamine is present on Q235. The segment at 284-313 is disordered; the sequence is AKRQQAEASTRRNLLGSGDRSDRNRTYNFP.

The protein belongs to the prokaryotic/mitochondrial release factor family. Methylated by PrmC. Methylation increases the termination efficiency of RF1.

The protein localises to the cytoplasm. In terms of biological role, peptide chain release factor 1 directs the termination of translation in response to the peptide chain termination codons UAG and UAA. The chain is Peptide chain release factor 1 from Salmonella agona (strain SL483).